The primary structure comprises 185 residues: Shikimate kinase (185 aa).

Residue 12-17 (GSGKTT) participates in ATP binding. Residue Thr-16 coordinates Mg(2+). Substrate contacts are provided by Asp-34, Arg-58, and Gly-79. Arg-116 lines the ATP pocket. Substrate is bound at residue Arg-135.

It belongs to the shikimate kinase family. Monomer. Mg(2+) is required as a cofactor.

Its subcellular location is the cytoplasm. The catalysed reaction is shikimate + ATP = 3-phosphoshikimate + ADP + H(+). It functions in the pathway metabolic intermediate biosynthesis; chorismate biosynthesis; chorismate from D-erythrose 4-phosphate and phosphoenolpyruvate: step 5/7. Catalyzes the specific phosphorylation of the 3-hydroxyl group of shikimic acid using ATP as a cosubstrate. The sequence is that of Shikimate kinase from Corynebacterium jeikeium (strain K411).